The sequence spans 609 residues: Proteasome-associated ATPase (609 aa).

Residues 1–27 are disordered; the sequence is MGSSERSEAFGTPRESDMSSGDEAELE. A coiled-coil region spans residues 17 to 96; the sequence is DMSSGDEAEL…LREEVDRLGQ (80 aa). 296 to 301 contacts ATP; that stretch reads GCGKTL. Positions 608–609 are docks into pockets in the proteasome alpha-ring; that stretch reads YL.

This sequence belongs to the AAA ATPase family. Homohexamer. Assembles into a hexameric ring structure that caps the 20S proteasome core. Strongly interacts with the prokaryotic ubiquitin-like protein Pup through a hydrophobic interface; the interacting region of ARC lies in its N-terminal coiled-coil domain. There is one Pup binding site per ARC hexamer ring. Upon ATP-binding, the C-terminus of ARC interacts with the alpha-rings of the proteasome core, possibly by binding to the intersubunit pockets.

It participates in protein degradation; proteasomal Pup-dependent pathway. Functionally, ATPase which is responsible for recognizing, binding, unfolding and translocation of pupylated proteins into the bacterial 20S proteasome core particle. May be essential for opening the gate of the 20S proteasome via an interaction with its C-terminus, thereby allowing substrate entry and access to the site of proteolysis. Thus, the C-termini of the proteasomal ATPase may function like a 'key in a lock' to induce gate opening and therefore regulate proteolysis. The chain is Proteasome-associated ATPase from Mycobacterium avium (strain 104).